A 108-amino-acid polypeptide reads, in one-letter code: L-rhamnose mutarotase (108 aa).

Tyr-19 contributes to the substrate binding site. His-23 (proton donor) is an active-site residue. Residues Tyr-45 and 80–81 contribute to the substrate site; that span reads WW.

The protein belongs to the rhamnose mutarotase family. As to quaternary structure, homodimer.

It is found in the cytoplasm. It carries out the reaction alpha-L-rhamnose = beta-L-rhamnose. Its pathway is carbohydrate metabolism; L-rhamnose metabolism. Functionally, involved in the anomeric conversion of L-rhamnose. This is L-rhamnose mutarotase from Ligilactobacillus salivarius (strain UCC118) (Lactobacillus salivarius).